We begin with the raw amino-acid sequence, 80 residues long: Conotoxin SmIVB (80 aa).

A signal peptide spans M1 to S21. A propeptide spanning residues I22 to R38 is cleaved from the precursor. At P40 the chain carries 4-hydroxyproline. O-linked (HexNAc...) serine glycosylation is present at S45. 4-hydroxyproline is present on residues P55, P60, P61, P70, and P72. S75 bears the Serine amide mark. The propeptide occupies G76–H80.

It belongs to the conotoxin A superfamily. In terms of processing, contains 3 disulfide bonds. Expressed by the venom duct.

It localises to the secreted. Its function is as follows. Neurotoxin with probable activity on sodium channel. Induces intense repetitive firing of the frog neuromuscular junction, leading to a tetanic contracture in muscle fiber (spastic paralysis). In vivo, shows the same effect as the whole venom when injected on fish prey. The chain is Conotoxin SmIVB from Conus stercusmuscarum (Fly-specked cone).